The sequence spans 334 residues: Holliday junction branch migration complex subunit RuvB (334 aa).

Positions 1-182 (MNERMVDQSM…FGVHLRLEYY (182 aa)) are large ATPase domain (RuvB-L). Residues L21, R22, G63, K66, T67, T68, 129–131 (EDF), R172, Y182, and R219 each bind ATP. Residue T67 participates in Mg(2+) binding. Residues 183–253 (NESDLKEIII…TTKHALGLLQ (71 aa)) form a small ATPAse domain (RuvB-S) region. Positions 256–334 (QHGLDYIDHK…HFAKSNEERE (79 aa)) are head domain (RuvB-H). DNA is bound by residues R292, R311, and R316.

This sequence belongs to the RuvB family. Homohexamer. Forms an RuvA(8)-RuvB(12)-Holliday junction (HJ) complex. HJ DNA is sandwiched between 2 RuvA tetramers; dsDNA enters through RuvA and exits via RuvB. An RuvB hexamer assembles on each DNA strand where it exits the tetramer. Each RuvB hexamer is contacted by two RuvA subunits (via domain III) on 2 adjacent RuvB subunits; this complex drives branch migration. In the full resolvosome a probable DNA-RuvA(4)-RuvB(12)-RuvC(2) complex forms which resolves the HJ.

Its subcellular location is the cytoplasm. The catalysed reaction is ATP + H2O = ADP + phosphate + H(+). Its function is as follows. The RuvA-RuvB-RuvC complex processes Holliday junction (HJ) DNA during genetic recombination and DNA repair, while the RuvA-RuvB complex plays an important role in the rescue of blocked DNA replication forks via replication fork reversal (RFR). RuvA specifically binds to HJ cruciform DNA, conferring on it an open structure. The RuvB hexamer acts as an ATP-dependent pump, pulling dsDNA into and through the RuvAB complex. RuvB forms 2 homohexamers on either side of HJ DNA bound by 1 or 2 RuvA tetramers; 4 subunits per hexamer contact DNA at a time. Coordinated motions by a converter formed by DNA-disengaged RuvB subunits stimulates ATP hydrolysis and nucleotide exchange. Immobilization of the converter enables RuvB to convert the ATP-contained energy into a lever motion, pulling 2 nucleotides of DNA out of the RuvA tetramer per ATP hydrolyzed, thus driving DNA branch migration. The RuvB motors rotate together with the DNA substrate, which together with the progressing nucleotide cycle form the mechanistic basis for DNA recombination by continuous HJ branch migration. Branch migration allows RuvC to scan DNA until it finds its consensus sequence, where it cleaves and resolves cruciform DNA. The protein is Holliday junction branch migration complex subunit RuvB of Staphylococcus aureus (strain bovine RF122 / ET3-1).